We begin with the raw amino-acid sequence, 107 residues long: MSSRGKRKDEDVRASDDESETHAPAKKVAKPADDSDQSDDIVVCNISKNRRVSVRNWNGKIWIDIREFYVKDGKTLPGKKGISLSVDQWNTLRNHAEDIEKALSDLS.

The interval 1–40 (MSSRGKRKDEDVRASDDESETHAPAKKVAKPADDSDQSDD) is disordered. Positions 7–23 (RKDEDVRASDDESETHA) are enriched in basic and acidic residues.

Belongs to the transcriptional coactivator PC4 family.

The protein localises to the nucleus. In terms of biological role, general coactivator that functions cooperatively with TAFs and mediates functional interactions between upstream activators and the general transcriptional machinery. Binds single-stranded DNA. This is RNA polymerase II transcriptional coactivator KIWI (KIWI) from Arabidopsis thaliana (Mouse-ear cress).